The following is a 161-amino-acid chain: Tick receptor for ospA (161 aa).

Interacts with ospA protein from B.burgdorferi. Glycosylated. In terms of tissue distribution, specifically expressed in gut. Localizes predominantly in the intercellular spaces and luminal surface of the gut. In the gut, it localizes along tight junctions. Not expressed in salivary gland or hemolymph.

The protein resides in the cell membrane. Serves as a receptor for ospA protein of B.burgdorferi, the Lyme disease agent. Required for spirochetal colonization. Essential for pathogen adherence to the vector. This Ixodes scapularis (Black-legged tick) protein is Tick receptor for ospA (TROSPA).